A 340-amino-acid chain; its full sequence is Phenylalanine--tRNA ligase alpha subunit (340 aa).

Residue Glu255 participates in Mg(2+) binding.

Belongs to the class-II aminoacyl-tRNA synthetase family. Phe-tRNA synthetase alpha subunit type 1 subfamily. In terms of assembly, tetramer of two alpha and two beta subunits. The cofactor is Mg(2+).

The protein localises to the cytoplasm. It carries out the reaction tRNA(Phe) + L-phenylalanine + ATP = L-phenylalanyl-tRNA(Phe) + AMP + diphosphate + H(+). The chain is Phenylalanine--tRNA ligase alpha subunit from Exiguobacterium sibiricum (strain DSM 17290 / CCUG 55495 / CIP 109462 / JCM 13490 / 255-15).